Here is a 98-residue protein sequence, read N- to C-terminus: Ferredoxin-3 (98 aa).

4Fe-4S ferredoxin-type domains follow at residues 18 to 47 (FVEA…LQAL) and 66 to 95 (VMSI…HSPL). [4Fe-4S] cluster contacts are provided by Cys-27, Cys-30, Cys-33, Cys-37, Cys-75, Cys-78, Cys-81, and Cys-85.

As to quaternary structure, homodimer. The cofactor is [4Fe-4S] cluster.

Functionally, ferredoxins are iron-sulfur proteins that transfer electrons in a wide variety of metabolic reactions. This Trichormus variabilis (strain ATCC 29413 / PCC 7937) (Anabaena variabilis) protein is Ferredoxin-3 (fdxB).